A 185-amino-acid chain; its full sequence is GYLGAPAVVAPGAPLAARGYAAPAYAAPLARYAAPVARAYAAPVARAYAPAVAATPAAVEYDPHPQYSFAYNVQDAHTGDSKTQHESRDGDVVQGSYSLAEPDGSIRTVDYTADPVNGFNAVVHKEAGAHPAAAPVAVAAPVAHAPVAVAAPVRAYAAPLARAAYAAPIARAAYGPALAYGGAYH.

6 consecutive repeat copies span residues 21 to 24 (AAPA), 33 to 36 (AAPV), 41 to 44 (AAPV), 133 to 136 (AAPV), 139 to 142 (AAPV), and 150 to 153 (AAPV). Positions 64–134 (HPQYSFAYNV…KEAGAHPAAA (71 aa)) constitute a Chitin-binding type R&amp;R domain.

Functionally, component of the cuticle of migratory locust which contains more than 100 different structural proteins. In Locusta migratoria (Migratory locust), this protein is Cuticle protein 18.6, isoform B.